Here is a 252-residue protein sequence, read N- to C-terminus: Phosphoglycolate phosphatase (252 aa).

Residue aspartate 13 is the Nucleophile of the active site. Mg(2+)-binding residues include aspartate 13, aspartate 15, and aspartate 192.

The protein belongs to the HAD-like hydrolase superfamily. CbbY/CbbZ/Gph/YieH family. In terms of assembly, monomer. Requires Mg(2+) as cofactor. Chloride serves as cofactor.

It carries out the reaction 2-phosphoglycolate + H2O = glycolate + phosphate. The protein operates within organic acid metabolism; glycolate biosynthesis; glycolate from 2-phosphoglycolate: step 1/1. Its function is as follows. Specifically catalyzes the dephosphorylation of 2-phosphoglycolate. Is involved in the dissimilation of the intracellular 2-phosphoglycolate formed during the DNA repair of 3'-phosphoglycolate ends, a major class of DNA lesions induced by oxidative stress. In Shigella sonnei (strain Ss046), this protein is Phosphoglycolate phosphatase.